Consider the following 418-residue polypeptide: Serine hydroxymethyltransferase (418 aa).

Residues Leu-121 and 125 to 127 contribute to the (6S)-5,6,7,8-tetrahydrofolate site; that span reads GHL. Residue Lys-230 is modified to N6-(pyridoxal phosphate)lysine. Residue 355 to 357 coordinates (6S)-5,6,7,8-tetrahydrofolate; the sequence is SPF.

Belongs to the SHMT family. In terms of assembly, homodimer. Requires pyridoxal 5'-phosphate as cofactor.

It localises to the cytoplasm. It catalyses the reaction (6R)-5,10-methylene-5,6,7,8-tetrahydrofolate + glycine + H2O = (6S)-5,6,7,8-tetrahydrofolate + L-serine. It participates in one-carbon metabolism; tetrahydrofolate interconversion. The protein operates within amino-acid biosynthesis; glycine biosynthesis; glycine from L-serine: step 1/1. Catalyzes the reversible interconversion of serine and glycine with tetrahydrofolate (THF) serving as the one-carbon carrier. This reaction serves as the major source of one-carbon groups required for the biosynthesis of purines, thymidylate, methionine, and other important biomolecules. Also exhibits THF-independent aldolase activity toward beta-hydroxyamino acids, producing glycine and aldehydes, via a retro-aldol mechanism. In Alcanivorax borkumensis (strain ATCC 700651 / DSM 11573 / NCIMB 13689 / SK2), this protein is Serine hydroxymethyltransferase.